The sequence spans 638 residues: MTKSNYSANNITVLKGLEAVRKRPGMYIGSTGPDGLHHLVYEVVDNCIDEAMAGFCDKILVVLEPNDIVRVEDNGRGIPVDIHPTEKISALELVLTRLHAGGKFDKGSYKVSGGLHGVGVSVVNALSVWMEAKVYKDGFEHYAKFEKGSILEPVKKIGETEKSGTVIRWAVDPSIFTETTVYNFEVLATRLRELAFLNSKISITMRDERLSTPKEVTFAFEGGISQFVSYLNESKQVFPKSPVFIEGEKNDILCEVAIQYNDGYNENLLSFVNDINTREGGTHLEGFKTALTRVMNDFLKKYPKLVKKMDKEEKLTGEDVRAGLTAIVSVKVPEPQFEGQTKTKLGNSDVRGIVDSFVNEKLTLFFEQNPNEVEKVLEKCVAEAAARIAARRAKEATRRKSGLDSFGLPGKLADCSLKDPESCEVYIVEGDSAGGSAKKGRDSKTQAILPLWGKMLNVEKTRLDKVVNNEKLQPIIATLGTGIGKDFNIEKLRYHKVIIMADADVDGSHIRTLLLTFFFRYMPQVIEKGHVYLAMPPLYKISHNKKEWYVYNDDERDSVLDQIGRGNNAAVQRYKGLGEMDGTQLWETTMDPARRKMMRVTLPDAVEADRIFSTLMGEEVEPRRKFIEENAVYANLDV.

Residues 423 to 537 (CEVYIVEGDS…KGHVYLAMPP (115 aa)) enclose the Toprim domain. The Mg(2+) site is built by glutamate 429, aspartate 502, and aspartate 504.

This sequence belongs to the type II topoisomerase GyrB family. As to quaternary structure, heterotetramer, composed of two GyrA and two GyrB chains. In the heterotetramer, GyrA contains the active site tyrosine that forms a transient covalent intermediate with DNA, while GyrB binds cofactors and catalyzes ATP hydrolysis. Requires Mg(2+) as cofactor. The cofactor is Mn(2+). It depends on Ca(2+) as a cofactor.

Its subcellular location is the cytoplasm. The enzyme catalyses ATP-dependent breakage, passage and rejoining of double-stranded DNA.. Its function is as follows. A type II topoisomerase that negatively supercoils closed circular double-stranded (ds) DNA in an ATP-dependent manner to modulate DNA topology and maintain chromosomes in an underwound state. Negative supercoiling favors strand separation, and DNA replication, transcription, recombination and repair, all of which involve strand separation. Also able to catalyze the interconversion of other topological isomers of dsDNA rings, including catenanes and knotted rings. Type II topoisomerases break and join 2 DNA strands simultaneously in an ATP-dependent manner. The chain is DNA gyrase subunit B from Treponema denticola (strain ATCC 35405 / DSM 14222 / CIP 103919 / JCM 8153 / KCTC 15104).